The primary structure comprises 903 residues: Dynamin-like GTPase msp1, mitochondrial (903 aa).

Residues 1 to 78 (MGISWFLSRF…RFFSFSSISR (78 aa)) constitute a mitochondrion transit peptide. The chain crosses the membrane as a helical span at residues 86 to 103 (LPVAGFSLVAGGAAYIGA). Positions 167–188 (VLQAERAKEHRSNSNDKQKSSD) are enriched in basic and acidic residues. The disordered stretch occupies residues 167-198 (VLQAERAKEHRSNSNDKQKSSDNDEDPNDTTV). Residues 198–214 (VGIGAALAASILSVDSV) form a helical membrane-spanning segment. Residues 260-531 (AVTLPSIVVI…LEYTMSKNLQ (272 aa)) form the Dynamin-type G domain. The G1 motif stretch occupies residues 270 to 277 (GSQSSGKS). GTP-binding residues include serine 273, serine 274, glycine 275, lysine 276, serine 277, serine 278, and glycine 292. Serine 277 provides a ligand contact to Mg(2+). The interval 296 to 298 (VTR) is G2 motif. Residues threonine 297 and aspartate 370 each coordinate Mg(2+). The tract at residues 370–373 (DLPG) is G3 motif. The segment at 438-441 (TKMD) is G4 motif. Residues lysine 439, aspartate 441, and serine 468 each contribute to the GTP site. A G5 motif region spans residues 467 to 470 (ISRI). Positions 691 to 805 (ATSEQVENCV…VLKSRACKHK (115 aa)) are paddle region. Residues cysteine 802 and cysteine 811 are joined by a disulfide bond. In terms of domain architecture, GED spans 805–898 (KEAKYTCPEI…KINSLVILEQ (94 aa)).

The protein belongs to the TRAFAC class dynamin-like GTPase superfamily. Dynamin/Fzo/YdjA family. Homooligomer. Interacts with cdr1. In terms of processing, cleavage of the transit peptide by mitochondrial processing protease (MPP) produces a long integral membrane form of msp1 (l-msp1). Further processing by a rhomboid protease after the transmembrane regions produces a short peripheral membrane form of msp1 (s-msp1). Both isoforms are required for full activity.

Its subcellular location is the mitochondrion inner membrane. The protein localises to the mitochondrion intermembrane space. It carries out the reaction GTP + H2O = GDP + phosphate + H(+). In terms of biological role, dynamin-related GTPase that is essential for normal mitochondrial morphology by mediating fusion of the mitochondrial inner membranes and maintaining respiratory chain function. Exists in two forms: the transmembrane, long form (Dynamin-like GTPase msp1, long form; l-msp1), which is tethered to the inner mitochondrial membrane, and the short soluble form (Dynamin-like GTPase msp1, short form; s-msp1), which results from proteolytic cleavage and localizes in the intermembrane space. Both forms (l-msp1 and s-msp1) cooperate to catalyze the fusion of the mitochondrial inner membrane. Its role in mitochondrial morphology is required for mitochondrial genome maintenance. Its function is as follows. Constitutes the transmembrane long form (l-msp1) that plays a central role in mitochondrial inner membrane fusion. L-msp1 and the soluble short form (s-msp1) form higher-order helical assemblies that coordinate the fusion of mitochondrial inner membranes. Inner membrane-anchored l-msp1 molecules initiate membrane remodeling by recruiting soluble s-msp1 to rapidly polymerize into a flexible cylindrical scaffold encaging the mitochondrial inner membrane. Once at the membrane surface, the formation of s-msp1 helices induce bilayer curvature. Msp1 dimerization through the paddle region, which inserts into cardiolipin-containing membrane, promotes GTP hydrolysis and the helical assembly of a flexible msp1 lattice on the membrane, which drives membrane curvature and mitochondrial fusion. Functionally, constitutes the soluble short form (s-msp1) generated by cleavage, which plays a central role in mitochondrial inner membrane fusion. The transmembrane long form (l-msp1) and the s-msp1 form higher-order helical assemblies that coordinate the fusion of mitochondrial inner membranes. Inner membrane-anchored l-msp1 molecules initiate membrane remodeling by recruiting soluble s-msp1 to rapidly polymerize into a flexible cylindrical scaffold encaging the mitochondrial inner membrane. Once at the membrane surface, the formation of s-msp1 helices induce bilayer curvature. Msp1 dimerization through the paddle region, which inserts into cardiolipin-containing membrane, promotes GTP hydrolysis and the helical assembly of a flexible msp1 lattice on the membrane, which drives membrane curvature and mitochondrial fusion. The polypeptide is Dynamin-like GTPase msp1, mitochondrial (Schizosaccharomyces pombe (strain 972 / ATCC 24843) (Fission yeast)).